Reading from the N-terminus, the 498-residue chain is Beta-amylase 5 (498 aa).

Substrate is bound by residues aspartate 56, histidine 96, and aspartate 104. The active-site Proton donor is the glutamate 189. Substrate is bound by residues lysine 298, histidine 303, and threonine 345. Catalysis depends on glutamate 383, which acts as the Proton acceptor. Substrate is bound by residues 384-385 (NA) and arginine 423.

It belongs to the glycosyl hydrolase 14 family. In terms of tissue distribution, detected in phloem sieve elements.

Its subcellular location is the cytoplasm. The enzyme catalyses Hydrolysis of (1-&gt;4)-alpha-D-glucosidic linkages in polysaccharides so as to remove successive maltose units from the non-reducing ends of the chains.. Its function is as follows. Beta-amylase activity. Major cytosolic beta-amylase isoform in rosette leaves and inflorescences stems. The protein is Beta-amylase 5 (BAM5) of Arabidopsis thaliana (Mouse-ear cress).